The primary structure comprises 261 residues: 5'-nucleotidase SurE (261 aa).

4 residues coordinate a divalent metal cation: Asp-8, Asp-9, Ser-39, and Asn-94.

It belongs to the SurE nucleotidase family. A divalent metal cation serves as cofactor.

It is found in the cytoplasm. It catalyses the reaction a ribonucleoside 5'-phosphate + H2O = a ribonucleoside + phosphate. Functionally, nucleotidase that shows phosphatase activity on nucleoside 5'-monophosphates. This chain is 5'-nucleotidase SurE, found in Archaeoglobus fulgidus (strain ATCC 49558 / DSM 4304 / JCM 9628 / NBRC 100126 / VC-16).